The chain runs to 610 residues: DEAD-box ATP-dependent RNA helicase 9, mitochondrial (610 aa).

The N-terminal 66 residues, 1 to 66, are a transit peptide targeting the mitochondrion; sequence MISTVLRRSI…SSPFGVKVRD (66 aa). Positions 116-144 match the Q motif motif; the sequence is LAIADLGISPEIVKALKGRGIEKLFPIQK. The 175-residue stretch at 147–321 folds into the Helicase ATP-binding domain; sequence LEPAMEGRDM…KKYLNNPLTI (175 aa). 160 to 167 provides a ligand contact to ATP; sequence ARTGTGKT. The DEAD box signature appears at 269–272; it reads DEAD. Residues 350 to 494 enclose the Helicase C-terminal domain; it reads IIGPLVKEHG…ELPSIAVERG (145 aa). Residues 542-557 are compositionally biased toward gly residues; sequence SGRSGGGGGSYGGSGG. Positions 542–610 are disordered; it reads SGRSGGGGGS…FGSNDGKRSY (69 aa). A compositionally biased stretch (low complexity) spans 558–572; sequence SSSRYSGGSDRSSGF. The span at 573 to 585 shows a compositional bias: gly residues; it reads GSFGSGGSSGGFG. Positions 586–596 are enriched in low complexity; sequence SDRSSQSSGRS.

Belongs to the DEAD box helicase family. DDX21/DDX50 subfamily.

It is found in the mitochondrion. The enzyme catalyses ATP + H2O = ADP + phosphate + H(+). This Arabidopsis thaliana (Mouse-ear cress) protein is DEAD-box ATP-dependent RNA helicase 9, mitochondrial (RH9).